A 362-amino-acid chain; its full sequence is Dihydroorotate dehydrogenase (quinone) (362 aa).

Residues alanine 62–lysine 66 and threonine 86 contribute to the FMN site. Lysine 66 is a binding site for substrate. Residue asparagine 111–phenylalanine 115 participates in substrate binding. The FMN site is built by asparagine 139 and asparagine 170. Asparagine 170 is a binding site for substrate. Serine 173 serves as the catalytic Nucleophile. Asparagine 175 is a binding site for substrate. Residues lysine 215 and serine 243 each contribute to the FMN site. Asparagine 244–threonine 245 is a binding site for substrate. FMN contacts are provided by residues glycine 266, glycine 295, and tyrosine 316–serine 317.

Belongs to the dihydroorotate dehydrogenase family. Type 2 subfamily. In terms of assembly, monomer. Requires FMN as cofactor.

Its subcellular location is the cell membrane. The enzyme catalyses (S)-dihydroorotate + a quinone = orotate + a quinol. Its pathway is pyrimidine metabolism; UMP biosynthesis via de novo pathway; orotate from (S)-dihydroorotate (quinone route): step 1/1. Functionally, catalyzes the conversion of dihydroorotate to orotate with quinone as electron acceptor. This Rhizobium rhizogenes (strain K84 / ATCC BAA-868) (Agrobacterium radiobacter) protein is Dihydroorotate dehydrogenase (quinone).